The following is a 168-amino-acid chain: DAZ-associated protein 2 (168 aa).

Over residues 1-13 (MNSKGQYPTQPTY) the composition is skewed to low complexity. Residues 1–25 (MNSKGQYPTQPTYPVQPPGNPVYPQ) form a disordered region. Residues 39 to 42 (PPAY) carry the PPAY motif. Ser-77 is subject to Phosphoserine.

As to quaternary structure, interacts with SOX6. Interacts with DAZ1 and DAZL. Interacts with IL17RB. May interact with FAM168B. Interacts with INCA1. Interacts with EIF4G1 and EIF4G2. Interacts (via PPAY motif) with NEDD4 (via WW domains). Interacts with transcription factor TCF4; the interaction results in localization of DAZAP2 to the nucleus. Interacts with transcription factors TCF7 and TCF7L1. Interacts with transcription factor LEF1. Interacts with serine/threonine-protein kinase HIPK2; the interaction results in phosphorylation of DAZAP2 which causes localization of DAZAP2 to the nucleus, reduces interaction of DAZAP2 with HIPK2 and prevents DAZAP2-dependent degradation of HIPK2. Interacts with ubiquitin ligase SIAH1; the interaction is decreased following phosphorylation of DAZAP2 by HIPK2. Interacts with TP53; the interaction is triggered by DNA damage. Post-translationally, ubiquitinated by SMURF2, leading to proteasomal degradation. Ubiquitinated by NEDD4, leading to proteasomal degradation. Following DNA damage, phosphorylated by HIPK2 which promotes DAZAP2 localization to the nucleus, reduces interaction of DAZAP2 with HIPK2 and SIAH1, and prevents DAZAP2-dependent ubiquitination of HIPK2 by E3 ubiquitin-protein ligase SIAH1 and subsequent HIPK2 proteasomal degradation. Widely expressed. Highly expressed in brain.

It is found in the cytoplasm. The protein localises to the nucleus. The protein resides in the nucleus speckle. Its subcellular location is the nuclear body. It localises to the stress granule. In terms of biological role, in unstressed cells, promotes SIAH1-mediated polyubiquitination and degradation of the serine/threonine-protein kinase HIPK2, probably by acting as a loading factor that potentiates complex formation between HIPK2 and ubiquitin ligase SIAH1. In response to DNA damage, localizes to the nucleus following phosphorylation by HIPK2 and modulates the expression of a subset of TP53/p53 target genes by binding to TP53 at target gene promoters. This limits the expression of a number of cell death-mediating TP53 target genes, reducing DNA damage-induced cell death. Enhances the binding of transcription factor TCF7L2/TCF4, a Wnt signaling pathway effector, to the promoters of target genes. Plays a role in stress granule formation. The sequence is that of DAZ-associated protein 2 (Dazap2) from Mus musculus (Mouse).